A 231-amino-acid chain; its full sequence is AA9 family lytic polysaccharide monooxygenase C (231 aa).

The signal sequence occupies residues 1 to 18 (MKSGLLFTTASLALTASA). Position 19 (His19) interacts with Cu(2+). An intrachain disulfide couples Cys60 to Cys179. 2 N-linked (GlcNAc...) asparagine glycosylation sites follow: Asn69 and Asn143. Positions 165 and 174 each coordinate O2. Tyr176 is a binding site for Cu(2+).

It belongs to the polysaccharide monooxygenase AA9 family. The cofactor is Cu(2+).

It is found in the secreted. It catalyses the reaction [(1-&gt;4)-beta-D-glucosyl]n+m + reduced acceptor + O2 = 4-dehydro-beta-D-glucosyl-[(1-&gt;4)-beta-D-glucosyl]n-1 + [(1-&gt;4)-beta-D-glucosyl]m + acceptor + H2O.. Functionally, lytic polysaccharide monooxygenase (LPMO) that depolymerizes crystalline and amorphous polysaccharides via the oxidation of scissile alpha- or beta-(1-4)-glycosidic bonds, yielding C1 oxidation products. Catalysis by LPMOs requires the reduction of the active-site copper from Cu(II) to Cu(I) by a reducing agent and H(2)O(2) or O(2) as a cosubstrate. This is AA9 family lytic polysaccharide monooxygenase C from Emericella nidulans (strain FGSC A4 / ATCC 38163 / CBS 112.46 / NRRL 194 / M139) (Aspergillus nidulans).